The chain runs to 400 residues: Enoyl-[acyl-carrier-protein] reductase [NADH] 1 (400 aa).

Residues 48 to 53 (GASSGY), 74 to 75 (FE), 111 to 112 (DA), and 139 to 140 (LA) each bind NAD(+). Position 225 (Tyr225) interacts with substrate. The active-site Proton donor is Tyr235. NAD(+)-binding positions include Lys244 and 273-275 (VVT).

The protein belongs to the TER reductase family. As to quaternary structure, monomer.

The catalysed reaction is a 2,3-saturated acyl-[ACP] + NAD(+) = a (2E)-enoyl-[ACP] + NADH + H(+). It functions in the pathway lipid metabolism; fatty acid biosynthesis. Functionally, involved in the final reduction of the elongation cycle of fatty acid synthesis (FAS II). Catalyzes the reduction of a carbon-carbon double bond in an enoyl moiety that is covalently linked to an acyl carrier protein (ACP). In Vibrio vulnificus (strain YJ016), this protein is Enoyl-[acyl-carrier-protein] reductase [NADH] 1.